We begin with the raw amino-acid sequence, 928 residues long: Protein Niban 1 (928 aa).

The N-myristoyl glycine moiety is linked to residue Gly-2. 5 positions are modified to phosphoserine: Ser-579, Ser-582, Ser-596, Ser-602, and Ser-646. Positions 580–596 (VSSLTDLKPPTGSNQAS) are enriched in polar residues. The segment at 580–600 (VSSLTDLKPPTGSNQASPARR) is disordered. 2 disordered regions span residues 618 to 654 (VFQE…GTEQ) and 669 to 707 (ATED…TASG). Positions 690-701 (LEDEEPAQEEPE) are enriched in acidic residues. At Ser-708 the chain carries Phosphoserine. Disordered regions lie at residues 723–877 (PVDS…ATAS) and 899–928 (PNPD…PSEE). Residues 801-818 (GGLTEEPLGPMEGELPGE) show a composition bias toward low complexity. Basic and acidic residues predominate over residues 825–834 (HEGRGGKCTE). Over residues 865–877 (MGGQSSAAQATAS) the composition is skewed to low complexity. A compositionally biased stretch (basic and acidic residues) spans 905 to 915 (LSHKDDVKEGE). Ser-926 is subject to Phosphoserine.

It belongs to the Niban family. As to expression, expressed in various types of thyroid tumor such as papillary thyroid carcinomas and oxyphilic thyroid tumors but not in normal thyroid tissue (at protein level). Strongly expressed in heart, skeletal muscle, pancreas, white blood cells and prostate with moderate expression in colon and spleen. Expressed in renal carcinoma cells but not in normal kidney.

Its subcellular location is the cytoplasm. It localises to the membrane. Its function is as follows. Regulates phosphorylation of a number of proteins involved in translation regulation including EIF2A, EIF4EBP1 and RPS6KB1. May be involved in the endoplasmic reticulum stress response. The polypeptide is Protein Niban 1 (Homo sapiens (Human)).